We begin with the raw amino-acid sequence, 827 residues long: Discs large homolog 1-like protein (827 aa).

Disordered stretches follow at residues histidine 38 to proline 61 and serine 102 to proline 133. The span at glycine 44–aspartate 56 shows a compositional bias: polar residues. PDZ domains follow at residues glutamate 159 to lysine 246, glutamate 254 to asparagine 341, and lysine 403 to proline 484. The 71-residue stretch at lysine 518 to glutamate 588 folds into the SH3 domain. The disordered stretch occupies residues valine 595–glycine 618. One can recognise a Guanylate kinase-like domain in the interval serine 637–glutamate 812.

Belongs to the MAGUK family.

It is found in the membrane. May play a role in synapse assembly and function. In Danio rerio (Zebrafish), this protein is Discs large homolog 1-like protein (dlg1l).